A 291-amino-acid polypeptide reads, in one-letter code: MTKECQDLQHLDNEESDHHQLRKGPPPSQPLLQRLCSGPRLLLLSLGLSLLLLVVVCVIGSQNSQLQKELRGLRETFSNFTASTEAQVKGLSTQGGNVGRKMKSLESQLEKQQKDLSEDHSSLLLHVKQFVSDLRSLSCQMAALQGNGSERACCPVNWVEHERSCYWFSRSGKAWADADNYCRLEDAHLVVVTSWEEQKFVQHHTGPVNTWMGLHDQNGPWKWVDGTDYETGFKNWRPEQPDDWYGHGLGGGEDCAHFTDDGRWNDDVCQRPYRWVCETELDKASQEPPLL.

The span at 1–19 (MTKECQDLQHLDNEESDHH) shows a compositional bias: basic and acidic residues. Residues 1-27 (MTKECQDLQHLDNEESDHHQLRKGPPP) form a disordered region. Topologically, residues 1-40 (MTKECQDLQHLDNEESDHHQLRKGPPPSQPLLQRLCSGPR) are cytoplasmic. The short motif at 5-8 (CQDL) is the Endocytosis signal element. Ser-16 is modified (phosphoserine). A lipid anchor (S-palmitoyl cysteine) is attached at Cys-36. Residues 41–61 (LLLLSLGLSLLLLVVVCVIGS) traverse the membrane as a helical; Signal-anchor for type II membrane protein segment. Residues 61–123 (SQNSQLQKEL…KDLSEDHSSL (63 aa)) adopt a coiled-coil conformation. Topologically, residues 62-291 (QNSQLQKELR…DKASQEPPLL (230 aa)) are extracellular. Residues Asn-79 and Asn-147 are each glycosylated (N-linked (GlcNAc...) asparagine). Disulfide bonds link Cys-154–Cys-165, Cys-182–Cys-277, and Cys-255–Cys-269. Residues 161–278 (HERSCYWFSR…CQRPYRWVCE (118 aa)) enclose the C-type lectin domain. The Ca(2+) site is built by Val-191, Glu-197, Asp-216, Gln-240, Asp-242, Asp-243, Glu-253, Asp-254, Asn-265, Asp-266, and Glu-278. Ser-285 is modified (phosphoserine).

In terms of assembly, interacts with LASS2. Phosphorylated on a cytoplasmic Ser residue.

The protein resides in the membrane. Functionally, mediates the endocytosis of plasma glycoproteins to which the terminal sialic acid residue on their complex carbohydrate moieties has been removed. The receptor recognizes terminal galactose and N-acetylgalactosamine units. After ligand binding to the receptor, the resulting complex is internalized and transported to a sorting organelle, where receptor and ligand are disassociated. The receptor then returns to the cell membrane surface. This Pongo abelii (Sumatran orangutan) protein is Asialoglycoprotein receptor 1 (ASGR1).